The primary structure comprises 150 residues: UPF0178 protein Bcen2424_1660 (150 aa).

It belongs to the UPF0178 family.

This is UPF0178 protein Bcen2424_1660 from Burkholderia cenocepacia (strain HI2424).